The primary structure comprises 499 residues: Bifunctional purine biosynthesis protein PurH (499 aa).

In terms of domain architecture, MGS-like spans 1–144; that stretch reads MIKRALISVF…KNFKDVVVLT (144 aa).

This sequence belongs to the PurH family.

It carries out the reaction (6R)-10-formyltetrahydrofolate + 5-amino-1-(5-phospho-beta-D-ribosyl)imidazole-4-carboxamide = 5-formamido-1-(5-phospho-D-ribosyl)imidazole-4-carboxamide + (6S)-5,6,7,8-tetrahydrofolate. The enzyme catalyses IMP + H2O = 5-formamido-1-(5-phospho-D-ribosyl)imidazole-4-carboxamide. It participates in purine metabolism; IMP biosynthesis via de novo pathway; 5-formamido-1-(5-phospho-D-ribosyl)imidazole-4-carboxamide from 5-amino-1-(5-phospho-D-ribosyl)imidazole-4-carboxamide (10-formyl THF route): step 1/1. The protein operates within purine metabolism; IMP biosynthesis via de novo pathway; IMP from 5-formamido-1-(5-phospho-D-ribosyl)imidazole-4-carboxamide: step 1/1. This is Bifunctional purine biosynthesis protein PurH from Clostridium botulinum (strain 657 / Type Ba4).